Reading from the N-terminus, the 308-residue chain is Phosphoribosylaminoimidazole-succinocarboxamide synthase (308 aa).

Belongs to the SAICAR synthetase family.

The catalysed reaction is 5-amino-1-(5-phospho-D-ribosyl)imidazole-4-carboxylate + L-aspartate + ATP = (2S)-2-[5-amino-1-(5-phospho-beta-D-ribosyl)imidazole-4-carboxamido]succinate + ADP + phosphate + 2 H(+). It functions in the pathway purine metabolism; IMP biosynthesis via de novo pathway; 5-amino-1-(5-phospho-D-ribosyl)imidazole-4-carboxamide from 5-amino-1-(5-phospho-D-ribosyl)imidazole-4-carboxylate: step 1/2. The chain is Phosphoribosylaminoimidazole-succinocarboxamide synthase from Stenotrophomonas maltophilia (strain R551-3).